A 392-amino-acid chain; its full sequence is Mycofactocin maturase MftC (392 aa).

One can recognise a Radical SAM core domain in the interval 18–228 (LDAPICLTWE…YDWLVAKGDR (211 aa)). The [4Fe-4S] cluster site is built by Cys32, Cys36, Cys39, Cys253, Cys260, Cys271, Cys312, Cys315, Cys321, Cys325, and Cys343. Positions 354 to 367 (KERVKPKPSGDHSR) are enriched in basic and acidic residues. Residues 354 to 377 (KERVKPKPSGDHSRGTKQGPVALK) are disordered.

The protein belongs to the radical SAM superfamily. MftC family. The cofactor is [4Fe-4S] cluster.

It carries out the reaction [mycofactocin precursor peptide]-C-terminal glycyl-L-valyl-L-tyrosine + S-adenosyl-L-methionine = [mycofactocin precursor peptide]-C-terminal glycyl-N-{[2-(4-hydroxyphenyl)ethenyl]-3-methylbutanamide} + 5'-deoxyadenosine + L-methionine + CO2. It catalyses the reaction [mycofactocin precursor peptide]-C-terminal glycyl-N-{[2-(4-hydroxyphenyl)ethenyl]-3-methylbutanamide} + AH2 + S-adenosyl-L-methionine = [mycofactocin precursor peptide]-C-terminal glycyl-N-{5-[(4-hydroxyphenyl)methyl]-4,4-dimethyl-2-oxopyrrolidin-3-yl}acetamide + 5'-deoxyadenosine + L-methionine + A + H(+). Functionally, radical S-adenosylmethionine (SAM) enzyme responsible for the first step of the biosynthesis of the enzyme cofactor mycofactocin (MFT). Catalyzes two reactions at the C-terminus of the mycofactocin precursor (the MftA peptide). The first one is the oxidative decarboxylation of the C-terminal L-tyrosine of MftA, forming an unsaturated tyramine moiety. The second reaction is the cross-linking of the tyramine with the penultimate L-valine residue, forming a five-membered lactam ring. Its activity requires the presence of the MftB chaperone. Is required for the in vivo ethanol assimilation in M.smegmatis. This is Mycofactocin maturase MftC from Mycolicibacterium smegmatis (strain ATCC 700084 / mc(2)155) (Mycobacterium smegmatis).